The sequence spans 263 residues: Tryptophan synthase alpha chain (263 aa).

Active-site proton acceptor residues include E49 and D60.

It belongs to the TrpA family. Tetramer of two alpha and two beta chains.

The enzyme catalyses (1S,2R)-1-C-(indol-3-yl)glycerol 3-phosphate + L-serine = D-glyceraldehyde 3-phosphate + L-tryptophan + H2O. It participates in amino-acid biosynthesis; L-tryptophan biosynthesis; L-tryptophan from chorismate: step 5/5. The alpha subunit is responsible for the aldol cleavage of indoleglycerol phosphate to indole and glyceraldehyde 3-phosphate. The protein is Tryptophan synthase alpha chain of Cereibacter sphaeroides (strain KD131 / KCTC 12085) (Rhodobacter sphaeroides).